We begin with the raw amino-acid sequence, 305 residues long: uncharacterized protein (305 aa).

This is an uncharacterized protein from Methanocaldococcus jannaschii (strain ATCC 43067 / DSM 2661 / JAL-1 / JCM 10045 / NBRC 100440) (Methanococcus jannaschii).